We begin with the raw amino-acid sequence, 407 residues long: Na(+)-translocating NADH-quinone reductase subunit F (407 aa).

The chain crosses the membrane as a helical span at residues 3–23 (IILGVVMFTLIVLALVLVILF). Residues 32-126 (GDITISVNDD…DMDIELPEEI (95 aa)) enclose the 2Fe-2S ferredoxin-type domain. Residues C69, C75, C78, and C110 each coordinate [2Fe-2S] cluster. In terms of domain architecture, FAD-binding FR-type spans 129-269 (VKKWECTVIS…SGPFGEFFAK (141 aa)). The segment at 272 to 389 (DAEMVFVGGG…PMMNAAVIGM (118 aa)) is catalytic.

The protein belongs to the NqrF family. In terms of assembly, composed of six subunits; NqrA, NqrB, NqrC, NqrD, NqrE and NqrF. Requires [2Fe-2S] cluster as cofactor. FAD serves as cofactor.

It localises to the cell inner membrane. The catalysed reaction is a ubiquinone + n Na(+)(in) + NADH + H(+) = a ubiquinol + n Na(+)(out) + NAD(+). Functionally, NQR complex catalyzes the reduction of ubiquinone-1 to ubiquinol by two successive reactions, coupled with the transport of Na(+) ions from the cytoplasm to the periplasm. The first step is catalyzed by NqrF, which accepts electrons from NADH and reduces ubiquinone-1 to ubisemiquinone by a one-electron transfer pathway. This is Na(+)-translocating NADH-quinone reductase subunit F from Vibrio campbellii (strain ATCC BAA-1116).